The following is a 110-amino-acid chain: UPF0122 protein SGO_1122 (110 aa).

It belongs to the UPF0122 family.

Functionally, might take part in the signal recognition particle (SRP) pathway. This is inferred from the conservation of its genetic proximity to ftsY/ffh. May be a regulatory protein. The chain is UPF0122 protein SGO_1122 from Streptococcus gordonii (strain Challis / ATCC 35105 / BCRC 15272 / CH1 / DL1 / V288).